A 213-amino-acid chain; its full sequence is MPKPIFISFEGPEGAGKTSVLEALISELKTKLGDDLVTTREPGGNPISEAIRSILQPEEDNGMDKRTEALLYTAARRQHLVENIKPALDQNKIVISDRYVDSSLAYQGGGRGLGIDNIWEINQFAIDGLLPDMTIYLDVPVEIGLARVNENRQGKIDRLDKESISFHQKVRETYLKLQSEFSDRIKIVDATQPLNKVIDDTRILINQILEDKS.

11–18 (GPEGAGKT) is a binding site for ATP.

It belongs to the thymidylate kinase family.

The enzyme catalyses dTMP + ATP = dTDP + ADP. In terms of biological role, phosphorylation of dTMP to form dTDP in both de novo and salvage pathways of dTTP synthesis. The polypeptide is Thymidylate kinase (Leuconostoc mesenteroides subsp. mesenteroides (strain ATCC 8293 / DSM 20343 / BCRC 11652 / CCM 1803 / JCM 6124 / NCDO 523 / NBRC 100496 / NCIMB 8023 / NCTC 12954 / NRRL B-1118 / 37Y)).